The sequence spans 209 residues: ATP-dependent Clp protease proteolytic subunit (209 aa).

Catalysis depends on serine 107, which acts as the Nucleophile. The active site involves histidine 132.

It belongs to the peptidase S14 family. As to quaternary structure, fourteen ClpP subunits assemble into 2 heptameric rings which stack back to back to give a disk-like structure with a central cavity, resembling the structure of eukaryotic proteasomes.

The protein localises to the cytoplasm. It catalyses the reaction Hydrolysis of proteins to small peptides in the presence of ATP and magnesium. alpha-casein is the usual test substrate. In the absence of ATP, only oligopeptides shorter than five residues are hydrolyzed (such as succinyl-Leu-Tyr-|-NHMec, and Leu-Tyr-Leu-|-Tyr-Trp, in which cleavage of the -Tyr-|-Leu- and -Tyr-|-Trp bonds also occurs).. Functionally, cleaves peptides in various proteins in a process that requires ATP hydrolysis. Has a chymotrypsin-like activity. Plays a major role in the degradation of misfolded proteins. This is ATP-dependent Clp protease proteolytic subunit from Ruegeria pomeroyi (strain ATCC 700808 / DSM 15171 / DSS-3) (Silicibacter pomeroyi).